A 149-amino-acid polypeptide reads, in one-letter code: MATKIRLKRMGKKFYAFYRVVIMDSRTKRDGRAIEEIGTYNPNTQPSTININSERAQYWLGVGAQPTEQVLNLLKITGDWQKFKGLDGAEGTLKTVEAGPDAAARVEAVEAQAQKLKAAKSEADAKAKAEAEAAATEEAPAEEPAAEAE.

The tract at residues 115–149 (KLKAAKSEADAKAKAEAEAAATEEAPAEEPAAEAE) is disordered. Over residues 119 to 131 (AKSEADAKAKAEA) the composition is skewed to basic and acidic residues. A compositionally biased stretch (acidic residues) spans 139–149 (APAEEPAAEAE).

The protein belongs to the bacterial ribosomal protein bS16 family.

This is Small ribosomal subunit protein bS16 from Bifidobacterium adolescentis (strain ATCC 15703 / DSM 20083 / NCTC 11814 / E194a).